A 398-amino-acid chain; its full sequence is Cell cycle checkpoint control protein RAD9B (398 aa).

Residues 272-281 (RTSSPQSLRL) are compositionally biased toward polar residues. A disordered region spans residues 272-359 (RTSSPQSLRL…DMEEGQSPSP (88 aa)). The span at 324-336 (SSSAAETRRASAS) shows a compositional bias: low complexity. Phosphoserine occurs at positions 349 and 358.

The protein belongs to the rad9 family. In terms of assembly, interacts with HUS1, HUS1B, RAD1, RAD9A and RAD17.

The polypeptide is Cell cycle checkpoint control protein RAD9B (Rad9b) (Rattus norvegicus (Rat)).